The following is a 230-amino-acid chain: 5'-methylthioadenosine/S-adenosylhomocysteine nucleosidase (230 aa).

Glu-12 (proton acceptor) is an active-site residue. Residues Gly-78, Ile-153, and 174 to 175 (ME) contribute to the substrate site. Asp-198 functions as the Proton donor in the catalytic mechanism.

The protein belongs to the PNP/UDP phosphorylase family. MtnN subfamily.

The enzyme catalyses S-adenosyl-L-homocysteine + H2O = S-(5-deoxy-D-ribos-5-yl)-L-homocysteine + adenine. It carries out the reaction S-methyl-5'-thioadenosine + H2O = 5-(methylsulfanyl)-D-ribose + adenine. It catalyses the reaction 5'-deoxyadenosine + H2O = 5-deoxy-D-ribose + adenine. It participates in amino-acid biosynthesis; L-methionine biosynthesis via salvage pathway; S-methyl-5-thio-alpha-D-ribose 1-phosphate from S-methyl-5'-thioadenosine (hydrolase route): step 1/2. Its function is as follows. Catalyzes the irreversible cleavage of the glycosidic bond in both 5'-methylthioadenosine (MTA) and S-adenosylhomocysteine (SAH/AdoHcy) to adenine and the corresponding thioribose, 5'-methylthioribose and S-ribosylhomocysteine, respectively. Also cleaves 5'-deoxyadenosine, a toxic by-product of radical S-adenosylmethionine (SAM) enzymes, into 5-deoxyribose and adenine. In Shewanella piezotolerans (strain WP3 / JCM 13877), this protein is 5'-methylthioadenosine/S-adenosylhomocysteine nucleosidase.